Here is a 239-residue protein sequence, read N- to C-terminus: Pyridoxine 5'-phosphate synthase (239 aa).

Asn-7 is a 3-amino-2-oxopropyl phosphate binding site. 9–10 (DH) contacts 1-deoxy-D-xylulose 5-phosphate. 3-amino-2-oxopropyl phosphate is bound at residue Arg-18. The Proton acceptor role is filled by His-43. 2 residues coordinate 1-deoxy-D-xylulose 5-phosphate: Arg-45 and His-50. Glu-70 serves as the catalytic Proton acceptor. Thr-100 provides a ligand contact to 1-deoxy-D-xylulose 5-phosphate. His-191 serves as the catalytic Proton donor. Residues Gly-192 and 213-214 (GH) each bind 3-amino-2-oxopropyl phosphate.

Belongs to the PNP synthase family. In terms of assembly, homooctamer; tetramer of dimers.

Its subcellular location is the cytoplasm. The enzyme catalyses 3-amino-2-oxopropyl phosphate + 1-deoxy-D-xylulose 5-phosphate = pyridoxine 5'-phosphate + phosphate + 2 H2O + H(+). It participates in cofactor biosynthesis; pyridoxine 5'-phosphate biosynthesis; pyridoxine 5'-phosphate from D-erythrose 4-phosphate: step 5/5. Functionally, catalyzes the complicated ring closure reaction between the two acyclic compounds 1-deoxy-D-xylulose-5-phosphate (DXP) and 3-amino-2-oxopropyl phosphate (1-amino-acetone-3-phosphate or AAP) to form pyridoxine 5'-phosphate (PNP) and inorganic phosphate. This Geobacter sp. (strain M21) protein is Pyridoxine 5'-phosphate synthase.